The primary structure comprises 347 residues: MKNSKAILQVPGTMKIISAEIPVPKEDEVLIKVEYVGICGSDVHGFESGPFIPPKDPNQEIGLGHECAGTVVAVGSRVRKFKPGDRVNIEPGVPCGHCRYCLEGKYNICPDVDFMATQPNYRGALTHYLCHPESFTYKLPDNMDTMEGALVEPAAVGMHAAMLADVKPGKKIIILGAGCIGLMTLQACKCLGATEIAVVDVLEKRLAMAEQLGATVVINGAKEDTIARCQQFTEDMGADIVFETAGSAVTVKQAPYLVMRGGKIMIVGTVPGDSAINFLKINREVTIQTVFRYANRYPVTIEAISSGRFDVKSMVTHIYDYRDVQQAFEESVNNKRDIIKGVIKISD.

Residues Cys39, His65, Cys95, Cys98, Cys101, Cys109, and Glu152 each contribute to the Zn(2+) site.

Belongs to the zinc-containing alcohol dehydrogenase family. Zn(2+) is required as a cofactor.

This is an uncharacterized protein from Escherichia coli (strain K12).